Reading from the N-terminus, the 77-residue chain is MMKIQIYGTGCANCQMLEKNAREAVKELGIDAEFEKIKEMDQILEAGLTALPGLAVDGELKIMGRVASKEEIKKILS.

Residues Cys11 and Cys14 each act as nucleophile in the active site. Cys11 and Cys14 form a disulfide bridge.

Belongs to the glutaredoxin family.

In terms of biological role, does not function as a glutathione-disulfide oxidoreductase in the presence of glutathione and glutathione reductase. Has low thioredoxin activity in vitro. The polypeptide is Thioredoxin (Methanothermobacter thermautotrophicus (strain ATCC 29096 / DSM 1053 / JCM 10044 / NBRC 100330 / Delta H) (Methanobacterium thermoautotrophicum)).